Here is a 210-residue protein sequence, read N- to C-terminus: Thymidylate kinase (210 aa).

10–17 (GPEGAGKS) serves as a coordination point for ATP.

It belongs to the thymidylate kinase family.

The catalysed reaction is dTMP + ATP = dTDP + ADP. Phosphorylation of dTMP to form dTDP in both de novo and salvage pathways of dTTP synthesis. This is Thymidylate kinase from Pseudomonas syringae pv. tomato (strain ATCC BAA-871 / DC3000).